The following is a 2335-amino-acid chain: Histone-lysine N-methyltransferase ATXR3 (2335 aa).

Disordered regions lie at residues 30 to 142 (NESK…FKDE), 332 to 355 (STGN…SYAD), 371 to 556 (CSRS…SSSK), and 902 to 961 (DQVP…KTDT). 2 stretches are compositionally biased toward polar residues: residues 31-46 (ESKT…TSIA) and 53-62 (QPANKPSASS). Positions 65–84 (VKKKRIVKVIRKVVKRRPKQ) are enriched in basic residues. A Nuclear localization signal 1 motif is present at residues 67–74 (KKRIVKVI). The span at 97 to 112 (PPSQVVQLPAESQLQI) shows a compositional bias: polar residues. Composition is skewed to basic and acidic residues over residues 340 to 353 (HGAE…KHSY), 371 to 390 (CSRS…RLYR), and 430 to 452 (WSPH…RERS). Positions 461-475 (HARKRSPRDRRHHDY) are enriched in basic residues. Basic and acidic residues-rich tracts occupy residues 485-498 (SPHD…RRDY), 507-548 (QSDR…ESNG), and 910-921 (PRAKVRSKERCP). The Nuclear localization signal 2 motif lies at 527-534 (ERRDCQTG). Positions 922-932 (SRPARPSPASS) are enriched in low complexity. Positions 941 to 961 (SHSQSTASTGQDSQGLWKTDT) are enriched in polar residues. The short motif at 1382–1389 (ARRSSAIL) is the Nuclear localization signal 3 element. The segment at 1532 to 1572 (NRKSFSSESDTSSELSDNGKSDNYSSASASESESDIRSEGR) is disordered. Low complexity predominate over residues 1535 to 1547 (SFSSESDTSSELS). Residues 1765–1904 (KEIESRSDDK…YGEEITFDYN (140 aa)) form the SET domain. Cys1868 contributes to the Zn(2+) binding site. Position 1903 (Tyr1903) interacts with S-adenosyl-L-methionine. The Post-SET domain occupies 1914–1930 (EASVCLCGSQVCRGSYL). Residues Cys1918, Cys1920, and Cys1925 each coordinate Zn(2+).

It belongs to the class V-like SAM-binding methyltransferase superfamily. Histone-lysine methyltransferase family. TRX/MLL subfamily. In terms of tissue distribution, expressed in roots, leaves, stems and inflorescences.

The protein resides in the nucleus. It catalyses the reaction L-lysyl(4)-[histone H3] + 3 S-adenosyl-L-methionine = N(6),N(6),N(6)-trimethyl-L-lysyl(4)-[histone H3] + 3 S-adenosyl-L-homocysteine + 3 H(+). In terms of biological role, histone methyltransferase specifically required for trimethylation of 'Lys-4' of histone H3 (H3K4me3) and is crucial for both sporophyte and gametophyte development. Function as a diurnal 'writer' to counteract the nocturne 'eraser' demethylase activity of JMJ14 thus orchestrating the circadian rhythm of histone modifications (e.g. H3K4me3) and modulating the rhythmic expression of diurnal target genes; this mechanism relies also on the circadian clock oscillators CCA1 and LHY. The polypeptide is Histone-lysine N-methyltransferase ATXR3 (Arabidopsis thaliana (Mouse-ear cress)).